We begin with the raw amino-acid sequence, 182 residues long: UPF0423 protein BRA0381/BS1330_II0378 (182 aa).

The first 24 residues, Met-1–Ala-24, serve as a signal peptide directing secretion.

Belongs to the UPF0423 family.

The polypeptide is UPF0423 protein BRA0381/BS1330_II0378 (Brucella suis biovar 1 (strain 1330)).